Here is a 518-residue protein sequence, read N- to C-terminus: GMP synthase [glutamine-hydrolyzing] (518 aa).

One can recognise a Glutamine amidotransferase type-1 domain in the interval K13–D203. The active-site Nucleophile is the C90. Residues H177 and E179 contribute to the active site. Residues W204–R393 enclose the GMPS ATP-PPase domain. S231–S237 provides a ligand contact to ATP.

In terms of assembly, homodimer.

The enzyme catalyses XMP + L-glutamine + ATP + H2O = GMP + L-glutamate + AMP + diphosphate + 2 H(+). It participates in purine metabolism; GMP biosynthesis; GMP from XMP (L-Gln route): step 1/1. Catalyzes the synthesis of GMP from XMP. The chain is GMP synthase [glutamine-hydrolyzing] from Listeria welshimeri serovar 6b (strain ATCC 35897 / DSM 20650 / CCUG 15529 / CIP 8149 / NCTC 11857 / SLCC 5334 / V8).